The sequence spans 934 residues: Isoleucine--tRNA ligase (934 aa).

Residues 58-68 (PYANGEIHIGH) carry the 'HIGH' region motif. Glu559 is a binding site for L-isoleucyl-5'-AMP. Residues 600 to 604 (KMSKS) carry the 'KMSKS' region motif. Lys603 contacts ATP. Zn(2+) is bound by residues Cys897, Cys900, Cys917, and Cys920.

This sequence belongs to the class-I aminoacyl-tRNA synthetase family. IleS type 1 subfamily. In terms of assembly, monomer. The cofactor is Zn(2+).

The protein resides in the cytoplasm. The catalysed reaction is tRNA(Ile) + L-isoleucine + ATP = L-isoleucyl-tRNA(Ile) + AMP + diphosphate. Its function is as follows. Catalyzes the attachment of isoleucine to tRNA(Ile). As IleRS can inadvertently accommodate and process structurally similar amino acids such as valine, to avoid such errors it has two additional distinct tRNA(Ile)-dependent editing activities. One activity is designated as 'pretransfer' editing and involves the hydrolysis of activated Val-AMP. The other activity is designated 'posttransfer' editing and involves deacylation of mischarged Val-tRNA(Ile). The sequence is that of Isoleucine--tRNA ligase from Teredinibacter turnerae (strain ATCC 39867 / T7901).